Consider the following 100-residue polypeptide: Integration host factor subunit alpha (100 aa).

This sequence belongs to the bacterial histone-like protein family. In terms of assembly, heterodimer of an alpha and a beta chain.

In terms of biological role, this protein is one of the two subunits of integration host factor, a specific DNA-binding protein that functions in genetic recombination as well as in transcriptional and translational control. This Buchnera aphidicola subsp. Schizaphis graminum (strain Sg) protein is Integration host factor subunit alpha.